Consider the following 455-residue polypeptide: MAPTNLTKKPSQYKQSSRKGKKAWRKNIDLSDVEQYMEKKIDHEITHGTSDITSLQNDALFHVDVEGDEILKNKLIKRKQIKKVLKSKEILDAVKTNSKIAALNHHKNSSGNPNKIQGVSKHELKKLMALAGRVHGESKIKNRVAKDGLVKTTAGDLWGEESNSKKQKVKLPSGIKLDVEKKDQIPEELLKKSTTSWSTASVRPSTLDIEPIAVKEFTEIPHAGKSYNPNNKAWSELINKEYKEEKAREDERIALEKYKERIRHLMETLDDNEEEESSSNEEEEEEEEENENENESTQCSGSDKEIKLSINKPVKNKKKTKYQRNKAKRHEEKVKLQQELKELRQRVKDLEEVINSEETEILSAIESDSNKVKKSKKNKKHKLGTKYSVIDERLEIKFSDELSDSLRKLKPEGNLLYDTVRKLQSSGKVETRVPVRKGRKYKQKITEKWTHKDFK.

The segment covering Met-1–Gln-15 has biased composition (polar residues). The tract at residues Met-1 to Arg-25 is disordered. Residues Ser-16–Arg-25 show a composition bias toward basic residues. Ser-31 carries the phosphoserine modification. The interval His-264–Lys-333 is disordered. A compositionally biased stretch (acidic residues) spans Thr-268–Asn-294. The span at Val-314–Lys-328 shows a compositional bias: basic residues.

Belongs to the NOP53 family. As to quaternary structure, interacts with CBF5, FPR3, FPR4, NOP2, PIH1, RRN3, RRP6 and PAP2. Interacts with pre-60S ribosomal particles.

It is found in the nucleus. It localises to the nucleolus. Its subcellular location is the nucleoplasm. Functionally, late-acting factor in the nuclear maturation of 60S ribosomal subunits, which is required for normal acquisition of export competence. Required for the export of the large subunit. Acts to stimulate the RNase activity of the exosome complex, and may recruit the exosome to 7S pre-rRNA for processing. Associates with numerous RNAs including the 27S and 7S pre-rRNAs and the box H/ACA snoRNA snR37. Also interacts (via N-terminal region) with the mature 25S rRNA and the mature 5.8S rRNA. The protein is Ribosome biogenesis protein NOP53 of Saccharomyces cerevisiae (strain ATCC 204508 / S288c) (Baker's yeast).